Reading from the N-terminus, the 336-residue chain is ATP-dependent 6-phosphofructokinase (336 aa).

Glycine 11 provides a ligand contact to ATP. 21–25 serves as a coordination point for ADP; the sequence is RAVVR. Residues 72–73 and 102–105 each bind ATP; these read RY and GDGS. Aspartate 103 contributes to the Mg(2+) binding site. Residue 125–127 coordinates substrate; it reads TID. Aspartate 127 (proton acceptor) is an active-site residue. Residue arginine 154 coordinates ADP. Substrate contacts are provided by residues arginine 162 and 169-171; that span reads MGR. ADP-binding positions include 185-187, lysine 211, and 213-215; these read GAD and KKH. Residues glutamate 222, arginine 244, and 250 to 253 each bind substrate; that span reads HIQR.

Belongs to the phosphofructokinase type A (PFKA) family. ATP-dependent PFK group I subfamily. Prokaryotic clade 'B1' sub-subfamily. In terms of assembly, homotetramer. Mg(2+) is required as a cofactor.

It localises to the cytoplasm. The enzyme catalyses beta-D-fructose 6-phosphate + ATP = beta-D-fructose 1,6-bisphosphate + ADP + H(+). It functions in the pathway carbohydrate degradation; glycolysis; D-glyceraldehyde 3-phosphate and glycerone phosphate from D-glucose: step 3/4. Its activity is regulated as follows. Allosterically activated by ADP and other diphosphonucleosides, and allosterically inhibited by phosphoenolpyruvate. Its function is as follows. Catalyzes the phosphorylation of D-fructose 6-phosphate to fructose 1,6-bisphosphate by ATP, the first committing step of glycolysis. The chain is ATP-dependent 6-phosphofructokinase from Streptococcus suis (strain 05ZYH33).